The chain runs to 344 residues: Succinylglutamate desuccinylase (344 aa).

Zn(2+) contacts are provided by histidine 63, glutamate 66, and histidine 160. Glutamate 224 is a catalytic residue.

Belongs to the AspA/AstE family. Succinylglutamate desuccinylase subfamily. Zn(2+) serves as cofactor.

It catalyses the reaction N-succinyl-L-glutamate + H2O = L-glutamate + succinate. The protein operates within amino-acid degradation; L-arginine degradation via AST pathway; L-glutamate and succinate from L-arginine: step 5/5. Functionally, transforms N(2)-succinylglutamate into succinate and glutamate. This is Succinylglutamate desuccinylase from Shewanella sp. (strain MR-7).